The primary structure comprises 992 residues: MESLIQHILSATSSLSMPSVDSDKLQLLLTRFPQATLSWLSGIDGLSVHQFKVVATHVIKESYSHLSPSVAVLLAKPSDYYKLVVHGLTQKQWNEFDDKVTDAPRTAISWLYNQILVVGQPWMKSLNEGLKEYLPGWLHTCLRMLANLWFGAERVLHGISHAVSDITTYQPWMSCRRCVAHSPKESLLGEATTTSNPRESSWFSWLLCGGVVAATVYGFYKWVTITETIDRQDLAKQRPTHMQKCYEEVKARLEEESKGFIHDRMEDELTKIVLEPAEIDNDGKVLKSEVAQYLVKNHGRFVRSLVTMAKNEFAGVPKPTEANQLAVWRYLYRVCDKKGVNPSDTQKSISAALPFVFLPSAYDQDQAITMNCDDTKKVLERYADTFRHTTPLQKLVTNPLVGANWTAWARSIFISDPETGLRFAKXGCIEKWQGVQCKRTRVRHPRLRCHFKDRDPKVRSIYRIAGLGDQYEFGLHNNSAANLERGLAERVYMVKNYKTDFVASLDPAFCPAPEPVRGIFKRLDKYKKEIVRRVGRKSPITDEMFLSYYDGPQLTTYSKAVISLSERPVAVQDSYLKTFIKAEKLNLTLKTDPCPRVIQPRHPRYNVELGKYLKHIEHPIYKAIDRIWGGKTIFKGMNVEAMGAEIHKKMCKYSNPCAIGFDASRFDQHVSVEALRFEHSIYKSIHGYPELLSLLLKWQIHNQGTAHTNDGFFKYLVDGKRMSGDMNTSLGNCILASLIVKDLVDSLGVDAQLVNNGDDNVLICSVDDEEVVVKALYDHWMKYGFEVVAEQPVYITEQIEFCQMKPVFDGTQYVLVRNPTVTMSKDACSITPFYTANSARKWCRAVGEAGLSLTGGMPIKQAYYQCMIRNGINKGNIHKSKEFRYGLSYVLHHGKSDRKARPISAATRYSFYLAFGYTPDEQTALEGYYDSLELEWTESRLGIPARTPECLLLRLLPKIPLQPKSPTKPVQRTASKPDLPDSQWQQALAAPL.

The region spanning 656–772 (PCAIGFDASR…ICSVDDEEVV (117 aa)) is the RdRp catalytic domain. The disordered stretch occupies residues 963-992 (PKSPTKPVQRTASKPDLPDSQWQQALAAPL). A compositionally biased stretch (polar residues) spans 964-974 (KSPTKPVQRTA).

This sequence belongs to the tombusviridae RNA polymerase family.

Its subcellular location is the host membrane. It carries out the reaction RNA(n) + a ribonucleoside 5'-triphosphate = RNA(n+1) + diphosphate. Functionally, RNA-dependent RNA polymerase that plays an essential role in the virus replication. In Muhlenbergia (Blackwell switchgrass), this protein is RNA-directed RNA polymerase.